The sequence spans 129 residues: ATP synthase epsilon chain (129 aa).

It belongs to the ATPase epsilon chain family. As to quaternary structure, F-type ATPases have 2 components, CF(1) - the catalytic core - and CF(0) - the membrane proton channel. CF(1) has five subunits: alpha(3), beta(3), gamma(1), delta(1), epsilon(1). CF(0) has three main subunits: a, b and c.

It localises to the cell inner membrane. Produces ATP from ADP in the presence of a proton gradient across the membrane. The chain is ATP synthase epsilon chain from Campylobacter jejuni subsp. jejuni serotype O:6 (strain 81116 / NCTC 11828).